The sequence spans 130 residues: Small ribosomal subunit protein uS8 (130 aa).

The protein belongs to the universal ribosomal protein uS8 family. In terms of assembly, part of the 30S ribosomal subunit. Contacts proteins S5 and S12.

In terms of biological role, one of the primary rRNA binding proteins, it binds directly to 16S rRNA central domain where it helps coordinate assembly of the platform of the 30S subunit. The protein is Small ribosomal subunit protein uS8 of Pseudomonas fluorescens (strain SBW25).